The primary structure comprises 172 residues: Small ribosomal subunit protein uS5 (172 aa).

The 64-residue stretch at 17 to 80 (LREKMIAVNR…DEARRKMIKV (64 aa)) folds into the S5 DRBM domain.

This sequence belongs to the universal ribosomal protein uS5 family. In terms of assembly, part of the 30S ribosomal subunit. Contacts proteins S4 and S8.

With S4 and S12 plays an important role in translational accuracy. In terms of biological role, located at the back of the 30S subunit body where it stabilizes the conformation of the head with respect to the body. This chain is Small ribosomal subunit protein uS5, found in Polynucleobacter asymbioticus (strain DSM 18221 / CIP 109841 / QLW-P1DMWA-1) (Polynucleobacter necessarius subsp. asymbioticus).